The following is a 173-amino-acid chain: Large ribosomal subunit protein uL10 (173 aa).

This sequence belongs to the universal ribosomal protein uL10 family. As to quaternary structure, part of the ribosomal stalk of the 50S ribosomal subunit. The N-terminus interacts with L11 and the large rRNA to form the base of the stalk. The C-terminus forms an elongated spine to which L12 dimers bind in a sequential fashion forming a multimeric L10(L12)X complex.

Its function is as follows. Forms part of the ribosomal stalk, playing a central role in the interaction of the ribosome with GTP-bound translation factors. In Cupriavidus necator (strain ATCC 17699 / DSM 428 / KCTC 22496 / NCIMB 10442 / H16 / Stanier 337) (Ralstonia eutropha), this protein is Large ribosomal subunit protein uL10.